The following is a 203-amino-acid chain: Histone deacetylase HDT4 (203 aa).

The segment at 2–5 is required to repress transcription; it reads EFWG. The segment at 121–203 is disordered; sequence AALPQNEINP…PFPCGPSCKK (83 aa). The segment covering 129–157 has biased composition (acidic residues); that stretch reads NPEEDDESDSDEMGLDEDDDSSDEEDVEA. Basic residues predominate over residues 180-193; the sequence is GGKKNKSSGGKKRC.

The protein belongs to the histone deacetylase HD2 family. Confined to stems and flowers with young siliques.

The protein localises to the nucleus. The protein resides in the nucleolus. Functionally, probably mediates the deacetylation of lysine residues lysine residues on the N-terminal part of the core histones (H2A, H2B, H3 and H4). Histone deacetylation gives a tag for epigenetic repression and plays an important role in transcriptional regulation, cell cycle progression and developmental events. The polypeptide is Histone deacetylase HDT4 (HDT4) (Arabidopsis thaliana (Mouse-ear cress)).